A 103-amino-acid polypeptide reads, in one-letter code: Spherulin-3A (103 aa).

Positions 1–13 (MSVCKGVSGNPAK) are N-terminal arm. Beta/gamma crystallin 'Greek key' domains follow at residues 14-55 (GEVF…KVGP) and 57-99 (TKAF…IVAT).

The protein belongs to the beta/gamma-crystallin family.

The protein localises to the cytoplasm. Its function is as follows. Structural protein. The protein is Spherulin-3A of Physarum polycephalum (Slime mold).